The primary structure comprises 135 residues: Ribonuclease P protein component (135 aa).

It belongs to the RnpA family. Consists of a catalytic RNA component (M1 or rnpB) and a protein subunit.

It catalyses the reaction Endonucleolytic cleavage of RNA, removing 5'-extranucleotides from tRNA precursor.. In terms of biological role, RNaseP catalyzes the removal of the 5'-leader sequence from pre-tRNA to produce the mature 5'-terminus. It can also cleave other RNA substrates such as 4.5S RNA. The protein component plays an auxiliary but essential role in vivo by binding to the 5'-leader sequence and broadening the substrate specificity of the ribozyme. The sequence is that of Ribonuclease P protein component from Xylella fastidiosa (strain Temecula1 / ATCC 700964).